We begin with the raw amino-acid sequence, 150 residues long: 3-hydroxyacyl-[acyl-carrier-protein] dehydratase FabZ (150 aa).

Residue His-57 is part of the active site.

This sequence belongs to the thioester dehydratase family. FabZ subfamily.

The protein resides in the cytoplasm. The enzyme catalyses a (3R)-hydroxyacyl-[ACP] = a (2E)-enoyl-[ACP] + H2O. Involved in unsaturated fatty acids biosynthesis. Catalyzes the dehydration of short chain beta-hydroxyacyl-ACPs and long chain saturated and unsaturated beta-hydroxyacyl-ACPs. The chain is 3-hydroxyacyl-[acyl-carrier-protein] dehydratase FabZ from Mannheimia succiniciproducens (strain KCTC 0769BP / MBEL55E).